Reading from the N-terminus, the 262-residue chain is RNA-binding protein 7 (262 aa).

Gly2 bears the N-acetylglycine mark. In terms of domain architecture, RRM spans 10 to 87 (RTLFVGNLET…RPIKIQFRAG (78 aa)). ZCCHC8 binding regions lie at residues 25–35 (LLFELFHQAGP) and 59–76 (HEVS…IKLF). The interval 95–121 (VSLSYPQHHVGNSSPTSTSPSRTVDNM) is disordered. A phosphoserine mark is found at Ser133 and Ser134. Arg149 is modified (omega-N-methylarginine). 2 disordered regions span residues 159 to 212 (SPHL…HYSR) and 242 to 262 (SHDY…SSRH). Polar residues predominate over residues 165–194 (SGFSPSAQSHNHTFNQSSSSQWRQDTPSSQ). Ser201 is modified (phosphoserine). Over residues 242–253 (SHDYDNRRDSGR) the composition is skewed to basic and acidic residues.

Component of the nuclear exosome targeting (NEXT) complex composed of MTREX, ZCCHC8, and RBM7 that directs a subset of non-coding short-lived RNAs for exosomal degradation. Interacts with ZCCHC8 and SF3B2/SAP145. Binds to MTREX through ZCCHC8. Interacts with YWHAE and YWHAZ; these interactions are stress-dependent and RBM7 phosphorylation dependent; release RNA from the NEXT complex and may affect RNA targeting to the nuclear RNA exosomome for degradation. Interacts with MEPCE and LARP7, the core subunits of 7SK snRNP; upon genotoxic stress this interaction is enhanced, triggering the release of inactive P-TEFb complex from the core and P-TEFb complex activation. Phosphorylated at Ser-133 by MAPK14/p38-alpha-activated MAPKAPK2/MK2; this phosphorylation is stress-dependent; this phosphorylation decreases its RNA-binding capacity therefore affecting RNA nuclear exosome-mediated degradation. This phosphorylation mediates YWHAE and YWHAZ interactions.

It is found in the nucleus. It localises to the nucleoplasm. RNA-binding subunit of the trimeric nuclear exosome targeting (NEXT) complex, a complex that functions as an RNA exosome cofactor that directs a subset of non-coding short-lived RNAs for exosomal degradation. NEXT is involved in surveillance and turnover of aberrant transcripts and non-coding RNAs. Binds preferentially polyuridine sequences and associates with newly synthesized RNAs, including pre-mRNAs and short-lived exosome substrates such as promoter upstream transcripts (PROMPTs), enhancer RNAs (eRNAs), and 3'-extended products from small nuclear RNAs (snRNAs). Participates in several biological processes including DNA damage response (DDR) and stress response. During stress response, activation of the p38MAPK-MK2 pathway decreases RBM7-RNA-binding and subsequently the RNA exosome degradation activities, thereby modulating the turnover of non-coding transcriptome. Participates in DNA damage response (DDR), through its interaction with MEPCE and LARP7, the core subunits of 7SK snRNP complex, that release the positive transcription elongation factor b (P-TEFb) complex from the 7SK snRNP. In turn, activation of P-TEFb complex induces the transcription of P-TEFb-dependent DDR genes to promote cell viability. This Bos taurus (Bovine) protein is RNA-binding protein 7.